We begin with the raw amino-acid sequence, 233 residues long: Superoxide dismutase [Mn] 3.3, mitochondrial (233 aa).

A mitochondrion-targeting transit peptide spans 1 to 29 (MALRTLASKNALSFALGGAARPSAESARG). Mn(2+)-binding residues include H57, H105, D194, and H198.

Belongs to the iron/manganese superoxide dismutase family. In terms of assembly, homotetramer. Requires Mn(2+) as cofactor. In terms of tissue distribution, predominantly expressed in the embryo late in embryogenesis.

The protein resides in the mitochondrion matrix. The enzyme catalyses 2 superoxide + 2 H(+) = H2O2 + O2. In terms of biological role, destroys superoxide anion radicals which are normally produced within the cells and which are toxic to biological systems. The chain is Superoxide dismutase [Mn] 3.3, mitochondrial (SODA.2) from Zea mays (Maize).